Reading from the N-terminus, the 278-residue chain is Tryptophan 2,3-dioxygenase (278 aa).

Residues 47–51, Tyr-109, and Arg-113 each bind substrate; that span reads FIVQH. Position 236 (His-236) interacts with heme. A substrate-binding site is contributed by Thr-250.

The protein belongs to the tryptophan 2,3-dioxygenase family. As to quaternary structure, homotetramer. Requires heme as cofactor.

The catalysed reaction is L-tryptophan + O2 = N-formyl-L-kynurenine. It participates in amino-acid degradation; L-tryptophan degradation via kynurenine pathway; L-kynurenine from L-tryptophan: step 1/2. Heme-dependent dioxygenase that catalyzes the oxidative cleavage of the L-tryptophan (L-Trp) pyrrole ring and converts L-tryptophan to N-formyl-L-kynurenine. Catalyzes the oxidative cleavage of the indole moiety. This Ralstonia pickettii (strain 12J) protein is Tryptophan 2,3-dioxygenase.